Consider the following 313-residue polypeptide: Aspartate carbamoyltransferase catalytic subunit (313 aa).

Carbamoyl phosphate-binding residues include arginine 51 and threonine 52. Lysine 80 is a binding site for L-aspartate. Positions 101, 129, and 132 each coordinate carbamoyl phosphate. The L-aspartate site is built by arginine 162 and arginine 224. 2 residues coordinate carbamoyl phosphate: leucine 263 and proline 264.

The protein belongs to the aspartate/ornithine carbamoyltransferase superfamily. ATCase family. As to quaternary structure, heterododecamer (2C3:3R2) of six catalytic PyrB chains organized as two trimers (C3), and six regulatory PyrI chains organized as three dimers (R2).

The enzyme catalyses carbamoyl phosphate + L-aspartate = N-carbamoyl-L-aspartate + phosphate + H(+). It participates in pyrimidine metabolism; UMP biosynthesis via de novo pathway; (S)-dihydroorotate from bicarbonate: step 2/3. Functionally, catalyzes the condensation of carbamoyl phosphate and aspartate to form carbamoyl aspartate and inorganic phosphate, the committed step in the de novo pyrimidine nucleotide biosynthesis pathway. In Phocaeicola vulgatus (strain ATCC 8482 / DSM 1447 / JCM 5826 / CCUG 4940 / NBRC 14291 / NCTC 11154) (Bacteroides vulgatus), this protein is Aspartate carbamoyltransferase catalytic subunit.